We begin with the raw amino-acid sequence, 389 residues long: Chalcone synthase 9 (389 aa).

The active site involves C164.

It belongs to the thiolase-like superfamily. Chalcone/stilbene synthases family.

The catalysed reaction is (E)-4-coumaroyl-CoA + 3 malonyl-CoA + 3 H(+) = 2',4,4',6'-tetrahydroxychalcone + 3 CO2 + 4 CoA. The protein operates within secondary metabolite biosynthesis; flavonoid biosynthesis. In terms of biological role, the primary product of this enzyme is 4,2',4',6'-tetrahydroxychalcone (also termed naringenin-chalcone or chalcone) which can under specific conditions spontaneously isomerize into naringenin. This Daucus carota (Wild carrot) protein is Chalcone synthase 9 (CHS9).